Consider the following 62-residue polypeptide: Zinc finger-containing protein P28b (62 aa).

An RING-type; degenerate zinc finger spans residues 1 to 46 (MKLFTQNDRYFGLLDSCTHIFCITCINIWHKTRRETGASDNCPICR).

This chain is Zinc finger-containing protein P28b, found in Vaccinia virus (strain Western Reserve) (VACV).